We begin with the raw amino-acid sequence, 354 residues long: DNA polymerase IV (354 aa).

Residues 6–187 (IIHVDCDCFY…LPVARLHGVG (182 aa)) enclose the UmuC domain. Mg(2+) contacts are provided by aspartate 10 and aspartate 105. Glutamate 106 is an active-site residue.

The protein belongs to the DNA polymerase type-Y family. In terms of assembly, monomer. It depends on Mg(2+) as a cofactor.

Its subcellular location is the cytoplasm. It catalyses the reaction DNA(n) + a 2'-deoxyribonucleoside 5'-triphosphate = DNA(n+1) + diphosphate. Functionally, poorly processive, error-prone DNA polymerase involved in untargeted mutagenesis. Copies undamaged DNA at stalled replication forks, which arise in vivo from mismatched or misaligned primer ends. These misaligned primers can be extended by PolIV. Exhibits no 3'-5' exonuclease (proofreading) activity. May be involved in translesional synthesis, in conjunction with the beta clamp from PolIII. This Pseudomonas putida (strain ATCC 700007 / DSM 6899 / JCM 31910 / BCRC 17059 / LMG 24140 / F1) protein is DNA polymerase IV.